The following is a 639-amino-acid chain: Polyvinylalcohol dehydrogenase (639 aa).

Residues 1-33 (MQQNIERNQVSMTTSRFVWGAVMALVALGSASA) form the signal peptide. The 117-residue stretch at 36–152 (LNLPDGAALY…TPDQWNGWGA (117 aa)) folds into the Cytochrome c domain. Cys-49, Cys-52, and His-53 together coordinate heme.

This sequence belongs to the bacterial PQQ dehydrogenase family. As to quaternary structure, monomer. The cofactor is pyrroloquinoline quinone.

Its subcellular location is the cytoplasm. It catalyses the reaction a polyvinyl alcohol + 2n Fe(III)-[cytochrome c] = an oxidized polyvinyl alcohol + 2n Fe(II)-[cytochrome c] + 2n H(+). Functionally, catalyzes the oxidation of polyvinyl alcohol (PVA) in the polyvinyl alcohol degradation pathway. This is Polyvinylalcohol dehydrogenase (pvaA) from Pseudomonas sp.